Here is a 524-residue protein sequence, read N- to C-terminus: NAD(P)H-quinone oxidoreductase chain 4, chloroplastic (524 aa).

A run of 14 helical transmembrane segments spans residues 4–24, 31–51, 87–107, 113–133, 134–154, 167–187, 211–231, 242–262, 275–295, 308–328, 330–350, 386–406, 417–437, and 465–485; these read YPWL…IPLI, LIRW…TYVF, IALV…AWPV, LFYF…LAQD, LLLF…LLSM, FILY…TISL, ILVY…FPFH, HYST…YGFI, IFAP…ALVS, SSVS…DLGL, GAIL…FLAG, LALP…GIVA, IITC…LSMV, and VFII…PDLT.

This sequence belongs to the complex I subunit 4 family.

Its subcellular location is the plastid. It localises to the chloroplast thylakoid membrane. It carries out the reaction a plastoquinone + NADH + (n+1) H(+)(in) = a plastoquinol + NAD(+) + n H(+)(out). The catalysed reaction is a plastoquinone + NADPH + (n+1) H(+)(in) = a plastoquinol + NADP(+) + n H(+)(out). This is NAD(P)H-quinone oxidoreductase chain 4, chloroplastic from Staurastrum punctulatum (Green alga).